The following is a 296-amino-acid chain: Lipoyl synthase (296 aa).

[4Fe-4S] cluster is bound by residues Cys37, Cys42, Cys48, Cys63, Cys67, Cys70, and Ser276. The 217-residue stretch at 49–265 (WSKKHTTVMI…ERVAKTKGFL (217 aa)) folds into the Radical SAM core domain.

It belongs to the radical SAM superfamily. Lipoyl synthase family. It depends on [4Fe-4S] cluster as a cofactor.

It localises to the cytoplasm. The enzyme catalyses [[Fe-S] cluster scaffold protein carrying a second [4Fe-4S](2+) cluster] + N(6)-octanoyl-L-lysyl-[protein] + 2 oxidized [2Fe-2S]-[ferredoxin] + 2 S-adenosyl-L-methionine + 4 H(+) = [[Fe-S] cluster scaffold protein] + N(6)-[(R)-dihydrolipoyl]-L-lysyl-[protein] + 4 Fe(3+) + 2 hydrogen sulfide + 2 5'-deoxyadenosine + 2 L-methionine + 2 reduced [2Fe-2S]-[ferredoxin]. It functions in the pathway protein modification; protein lipoylation via endogenous pathway; protein N(6)-(lipoyl)lysine from octanoyl-[acyl-carrier-protein]: step 2/2. Catalyzes the radical-mediated insertion of two sulfur atoms into the C-6 and C-8 positions of the octanoyl moiety bound to the lipoyl domains of lipoate-dependent enzymes, thereby converting the octanoylated domains into lipoylated derivatives. The polypeptide is Lipoyl synthase (Rickettsia massiliae (strain Mtu5)).